Reading from the N-terminus, the 331-residue chain is MNAHVRPVDPANVDPAQPRHDWTLEEVEALFELPFTELVFRAAEVHRRWFDPTELQLSQLLSVKTGGCPEDCGYCAQSQKFKTGLAASKLMEAETVIAAAAEAKAGGAQRFCMGAAWRDLKDRDLPKVAAMISGVKALGLETCATLGMLTADQAKALKAAGLDYYNHNLDTGPDYYDKVVTTRTYQDRLDTLAAVRDAGMATCCGGIVGMGETRRDRAGLLHQLATLPAHPDSLPINDLMPIPGTPLGDSKAVDPLEFVRMIAVARIVCPKSMVRIAAGREHMTKELQALCFLAGANSIFVGARLLTTDNPEKTADEALLADLKMKPMAMA.

The region spanning Thr-53–Lys-271 is the Radical SAM core domain. The [4Fe-4S] cluster site is built by Cys-68, Cys-72, and Cys-75. The [2Fe-2S] cluster site is built by Cys-112, Cys-143, Cys-203, and Arg-275.

Belongs to the radical SAM superfamily. Biotin synthase family. In terms of assembly, homodimer. Requires [4Fe-4S] cluster as cofactor. [2Fe-2S] cluster serves as cofactor.

The catalysed reaction is (4R,5S)-dethiobiotin + (sulfur carrier)-SH + 2 reduced [2Fe-2S]-[ferredoxin] + 2 S-adenosyl-L-methionine = (sulfur carrier)-H + biotin + 2 5'-deoxyadenosine + 2 L-methionine + 2 oxidized [2Fe-2S]-[ferredoxin]. The protein operates within cofactor biosynthesis; biotin biosynthesis; biotin from 7,8-diaminononanoate: step 2/2. Functionally, catalyzes the conversion of dethiobiotin (DTB) to biotin by the insertion of a sulfur atom into dethiobiotin via a radical-based mechanism. This Phenylobacterium zucineum (strain HLK1) protein is Biotin synthase.